The chain runs to 81 residues: Photosystem I iron-sulfur center (81 aa).

2 4Fe-4S ferredoxin-type domains span residues serine 2 to tryptophan 31 and isoleucine 39 to tyrosine 68. The [4Fe-4S] cluster site is built by cysteine 11, cysteine 14, cysteine 17, cysteine 21, cysteine 48, cysteine 51, cysteine 54, and cysteine 58.

The cyanobacterial PSI reaction center is composed of one copy each of PsaA,B,C,D,E,F,I,J,K,L,M and X, and forms trimeric complexes. It depends on [4Fe-4S] cluster as a cofactor.

It is found in the cellular thylakoid membrane. The enzyme catalyses reduced [plastocyanin] + hnu + oxidized [2Fe-2S]-[ferredoxin] = oxidized [plastocyanin] + reduced [2Fe-2S]-[ferredoxin]. In terms of biological role, apoprotein for the two 4Fe-4S centers FA and FB of photosystem I (PSI); essential for photochemical activity. FB is the terminal electron acceptor of PSI, donating electrons to ferredoxin. The C-terminus interacts with PsaA/B/D and helps assemble the protein into the PSI complex. Required for binding of PsaD and PsaE to PSI. PSI is a plastocyanin/cytochrome c6-ferredoxin oxidoreductase, converting photonic excitation into a charge separation, which transfers an electron from the donor P700 chlorophyll pair to the spectroscopically characterized acceptors A0, A1, FX, FA and FB in turn. The polypeptide is Photosystem I iron-sulfur center (Prochlorococcus marinus (strain MIT 9303)).